The sequence spans 133 residues: Hemiptericin (133 aa).

In terms of biological role, antibacterial peptide. Affects Gram-negative bacteria. The protein is Hemiptericin of Pyrrhocoris apterus (Sap sucking bug).